We begin with the raw amino-acid sequence, 421 residues long: Tyrosine--tRNA ligase (421 aa).

Y42 is an L-tyrosine binding site. The 'HIGH' region motif lies at 47-56 (CTAPSLHVGS). Positions 179 and 183 each coordinate L-tyrosine. A 'KMSKS' region motif is present at residues 239-243 (KMGKT). K242 serves as a coordination point for ATP. Positions 354–419 (LGILAAFAKA…RKKHVLLRLA (66 aa)) constitute an S4 RNA-binding domain.

Belongs to the class-I aminoacyl-tRNA synthetase family. TyrS type 1 subfamily. In terms of assembly, homodimer.

The protein localises to the cytoplasm. It catalyses the reaction tRNA(Tyr) + L-tyrosine + ATP = L-tyrosyl-tRNA(Tyr) + AMP + diphosphate + H(+). Functionally, catalyzes the attachment of tyrosine to tRNA(Tyr) in a two-step reaction: tyrosine is first activated by ATP to form Tyr-AMP and then transferred to the acceptor end of tRNA(Tyr). This chain is Tyrosine--tRNA ligase, found in Beijerinckia indica subsp. indica (strain ATCC 9039 / DSM 1715 / NCIMB 8712).